A 523-amino-acid chain; its full sequence is Arylsulfatase K (523 aa).

Positions 1 to 16 (MLRVFVLLIFNVNAYC) are cleaved as a signal peptide. Ca(2+)-binding residues include Asp-35 and Cys-75. Cys-75 (nucleophile) is an active-site residue. 3-oxoalanine (Cys) is present on Cys-75. N-linked (GlcNAc...) asparagine glycosylation is present at Asn-103. Substrate contacts are provided by Lys-123 and His-246. N-linked (GlcNAc...) asparagine glycosylation occurs at Asn-257. 2 residues coordinate Ca(2+): Asp-308 and His-309. Asn-405 carries an N-linked (GlcNAc...) asparagine glycan.

It belongs to the sulfatase family. It depends on Ca(2+) as a cofactor. Post-translationally, the conversion to 3-oxoalanine (also known as C-formylglycine, FGly), of a serine or cysteine residue in prokaryotes and of a cysteine residue in eukaryotes, is critical for catalytic activity.

It is found in the secreted. Its subcellular location is the lysosome. It catalyses the reaction an aryl sulfate + H2O = a phenol + sulfate + H(+). The catalysed reaction is Hydrolysis of the 2-sulfate groups of the 2-O-sulfo-D-glucuronate residues of chondroitin sulfate, heparin and heparitin sulfate.. Catalyzes the hydrolysis of pseudosubstrates such as p-nitrocatechol sulfate and p-nitrophenyl sulfate. Catalyzes the hydrolysis of the 2-sulfate groups of the 2-O-sulfo-D-glucuronate residues of chondroitin sulfate, heparin and heparitin sulfate. Acts selectively on 2-sulfoglucuronate and lacks activity against 2-sulfoiduronate. This Danio rerio (Zebrafish) protein is Arylsulfatase K (arsk).